The following is a 99-amino-acid chain: Protein SPIRAL1-like 5 (99 aa).

Residues Met1–Ser12 show a composition bias toward gly residues. Residues Met1–Lys99 form a disordered region. Residues Thr27–Pro39 show a composition bias toward pro residues. Residues Lys56 to Phe73 are compositionally biased toward polar residues. The residue at position 58 (Ser58) is a Phosphoserine.

The protein belongs to the SPIRAL1 family. As to expression, expressed exclusively in stems and flowers.

In terms of biological role, acts redundantly with SPR1 in maintaining the cortical microtubules organization essential for anisotropic cell growth. This Arabidopsis thaliana (Mouse-ear cress) protein is Protein SPIRAL1-like 5 (SP1L5).